Reading from the N-terminus, the 98-residue chain is Hainantoxin-XVII.2 (98 aa).

An N-terminal signal peptide occupies residues 1–40; sequence MTTVGVSLFRRSPEKITMKIAAFLGLSFLLIASYVLICEA. Residues 41 to 64 constitute a propeptide that is removed on maturation; it reads QHPGFQELLILEENMRDPENSKER. 3 disulfide bridges follow: Cys-66/Cys-81, Cys-73/Cys-85, and Cys-80/Cys-95.

The protein belongs to the hainantoxin family. 17 subfamily. Expressed by the venom gland.

It is found in the secreted. Functionally, putative ion channel inhibitor. This is Hainantoxin-XVII.2 from Cyriopagopus hainanus (Chinese bird spider).